We begin with the raw amino-acid sequence, 157 residues long: Transcription elongation factor GreA (157 aa).

Belongs to the GreA/GreB family.

In terms of biological role, necessary for efficient RNA polymerase transcription elongation past template-encoded arresting sites. The arresting sites in DNA have the property of trapping a certain fraction of elongating RNA polymerases that pass through, resulting in locked ternary complexes. Cleavage of the nascent transcript by cleavage factors such as GreA or GreB allows the resumption of elongation from the new 3'terminus. GreA releases sequences of 2 to 3 nucleotides. This Phenylobacterium zucineum (strain HLK1) protein is Transcription elongation factor GreA.